Here is a 599-residue protein sequence, read N- to C-terminus: Dachshund homolog 2 (599 aa).

The tract at residues 69-155 is DACHbox-N; it reads RMVDMHGMKV…LITRKDFETL (87 aa). Disordered stretches follow at residues 166-186, 237-280, and 370-409; these read RQMTRKQAVNSSRPGRPPKRS, LQGN…GPQH, and RIPESPSPAPSLEENHRPGSQTSSHTSSSVSSSPSQMDHH. Over residues 237-262 the composition is skewed to polar residues; it reads LQGNGSQNGTESEPDDLNSNTGGSES. The segment covering 389–405 has biased composition (low complexity); it reads SQTSSHTSSSVSSSPSQ. A DACHbox-C region spans residues 453 to 533; it reads SSVETLLTNI…KTKRKLQEAL (81 aa). A coiled-coil region spans residues 459-554; sequence LTNIQGLLKV…QALKQATTSD (96 aa).

The protein belongs to the DACH/dachshund family. In terms of assembly, interacts with SIX6 and EYA2.

It localises to the nucleus. Functionally, transcription factor that is involved in regulation of organogenesis. Seems to be a regulator for SIX1 and SIX6. Seems to act as a corepressor of SIX6 in regulating proliferation by directly repressing cyclin-dependent kinase inhibitors, including the p27Kip1 promoter. Is recruited with SIX6 to the p27Kip1 promoter in embryonal retina. SIX6 corepression also seems to involve NCOR1, TBL1, HDAC1 and HDAC3. May be involved together with PAX3, SIX1, and EYA2 in regulation of myogenesis. In the developing somite, expression of DACH2 and PAX3 is regulated by the overlying ectoderm, and DACH2 and PAX3 positively regulate each other's expression. Probably binds to DNA via its DACHbox-N domain. This Homo sapiens (Human) protein is Dachshund homolog 2 (DACH2).